Consider the following 221-residue polypeptide: Protein lethal(2)k10201 (221 aa).

2 consecutive C2H2-type zinc fingers follow at residues 74–97 and 113–138; these read YSCVECRKMLPTAHLLDLHITEQH and FSCFLEECTIKFHTARQRKDHCIITH. The segment at 146–168 is disordered; that stretch reads FDHSKNRGKQKHQGKSKPNSMEV. Residues 151 to 160 are compositionally biased toward basic residues; sequence NRGKQKHQGK.

Vital for development. This is Protein lethal(2)k10201 (l(2)k10201) from Drosophila melanogaster (Fruit fly).